The following is a 357-amino-acid chain: tRNA/tmRNA (uracil-C(5))-methyltransferase (357 aa).

S-adenosyl-L-methionine contacts are provided by Gln-180, Tyr-209, Asn-214, Glu-230, and Asp-290. The Nucleophile role is filled by Cys-315. Glu-349 (proton acceptor) is an active-site residue.

It belongs to the class I-like SAM-binding methyltransferase superfamily. RNA M5U methyltransferase family. TrmA subfamily.

The enzyme catalyses uridine(54) in tRNA + S-adenosyl-L-methionine = 5-methyluridine(54) in tRNA + S-adenosyl-L-homocysteine + H(+). It carries out the reaction uridine(341) in tmRNA + S-adenosyl-L-methionine = 5-methyluridine(341) in tmRNA + S-adenosyl-L-homocysteine + H(+). Functionally, dual-specificity methyltransferase that catalyzes the formation of 5-methyluridine at position 54 (m5U54) in all tRNAs, and that of position 341 (m5U341) in tmRNA (transfer-mRNA). The sequence is that of tRNA/tmRNA (uracil-C(5))-methyltransferase from Campylobacter jejuni subsp. jejuni serotype O:2 (strain ATCC 700819 / NCTC 11168).